The following is a 210-amino-acid chain: Protein RFS1 (210 aa).

Residues 4–203 enclose the Flavodoxin-like domain; it reads VAILIYSVDD…RVHQLQGKAF (200 aa).

Belongs to the WrbA family.

The protein localises to the cytoplasm. Its subcellular location is the membrane raft. The polypeptide is Protein RFS1 (RFS1) (Saccharomyces cerevisiae (strain ATCC 204508 / S288c) (Baker's yeast)).